The chain runs to 330 residues: tRNA U34 carboxymethyltransferase (330 aa).

Carboxy-S-adenosyl-L-methionine is bound by residues lysine 91, tryptophan 105, lysine 110, glycine 130, 152-154, 181-182, methionine 196, tyrosine 200, and arginine 315; these read DPS and IE.

It belongs to the class I-like SAM-binding methyltransferase superfamily. CmoB family. Homotetramer.

It carries out the reaction carboxy-S-adenosyl-L-methionine + 5-hydroxyuridine(34) in tRNA = 5-carboxymethoxyuridine(34) in tRNA + S-adenosyl-L-homocysteine + H(+). In terms of biological role, catalyzes carboxymethyl transfer from carboxy-S-adenosyl-L-methionine (Cx-SAM) to 5-hydroxyuridine (ho5U) to form 5-carboxymethoxyuridine (cmo5U) at position 34 in tRNAs. The polypeptide is tRNA U34 carboxymethyltransferase (Shewanella frigidimarina (strain NCIMB 400)).